A 125-amino-acid polypeptide reads, in one-letter code: Small ribosomal subunit protein bS6 (125 aa).

The tract at residues 99 to 125 is disordered; the sequence is ASPMVKAREERKPLTEVENNDFEDAEE. Residues 104-113 are compositionally biased toward basic and acidic residues; that stretch reads KAREERKPLT. Over residues 116–125 the composition is skewed to acidic residues; that stretch reads ENNDFEDAEE.

The protein belongs to the bacterial ribosomal protein bS6 family.

Its function is as follows. Binds together with bS18 to 16S ribosomal RNA. The protein is Small ribosomal subunit protein bS6 of Histophilus somni (strain 2336) (Haemophilus somnus).